A 202-amino-acid polypeptide reads, in one-letter code: Holliday junction resolvase RecU (202 aa).

Residues threonine 85, aspartate 87, glutamate 100, and glutamine 119 each contribute to the Mg(2+) site.

Belongs to the RecU family. Requires Mg(2+) as cofactor.

It is found in the cytoplasm. It catalyses the reaction Endonucleolytic cleavage at a junction such as a reciprocal single-stranded crossover between two homologous DNA duplexes (Holliday junction).. Its function is as follows. Endonuclease that resolves Holliday junction intermediates in genetic recombination. Cleaves mobile four-strand junctions by introducing symmetrical nicks in paired strands. Promotes annealing of linear ssDNA with homologous dsDNA. Required for DNA repair, homologous recombination and chromosome segregation. This chain is Holliday junction resolvase RecU, found in Streptococcus equi subsp. zooepidemicus (strain MGCS10565).